The sequence spans 205 residues: LexA repressor (205 aa).

Positions 28 to 48 (VREIGEAVGLASSSTVHGHLA) form a DNA-binding region, H-T-H motif. Catalysis depends on for autocatalytic cleavage activity residues Ser-127 and Lys-165.

It belongs to the peptidase S24 family. As to quaternary structure, homodimer. Post-translationally, following treatment with mitomycin C protein levels begin to decrease after a 5-min lag and do not return to their original levels for at least 90 minutes.

The enzyme catalyses Hydrolysis of Ala-|-Gly bond in repressor LexA.. In terms of biological role, represses dinA, dinB, dinC, recA genes and itself by binding to the 14 bp palindromic sequence 5'-CGAACNNNNGTTCG-3'; some genes have a tandem consensus sequence and their binding is cooperative. In the presence of single-stranded DNA, RecA interacts with LexA causing an autocatalytic cleavage which disrupts the DNA-binding part of LexA, leading to derepression of the SOS regulon and eventually DNA repair; autocleavage is maximal at pH 11 in the absence of RecA and ssDNA. The sequence is that of LexA repressor from Bacillus subtilis (strain 168).